A 473-amino-acid chain; its full sequence is tRNA-2-methylthio-N(6)-dimethylallyladenosine synthase (473 aa).

The segment at 1–21 is disordered; sequence MTQDSALLQAPEAIPSESLRD. The MTTase N-terminal domain maps to 26 to 146; that stretch reads RKVFIKTYGC…LPEALRRAKQ (121 aa). Cysteine 35, cysteine 71, cysteine 109, cysteine 187, cysteine 191, and cysteine 194 together coordinate [4Fe-4S] cluster. The 233-residue stretch at 173–405 folds into the Radical SAM core domain; that stretch reads RARGVTAFLT…QMLLLKQQQE (233 aa). The TRAM domain occupies 408-470; it reads ESCVGKEIDL…TNSLFAEHAE (63 aa).

The protein belongs to the methylthiotransferase family. MiaB subfamily. As to quaternary structure, monomer. The cofactor is [4Fe-4S] cluster.

The protein resides in the cytoplasm. The enzyme catalyses N(6)-dimethylallyladenosine(37) in tRNA + (sulfur carrier)-SH + AH2 + 2 S-adenosyl-L-methionine = 2-methylsulfanyl-N(6)-dimethylallyladenosine(37) in tRNA + (sulfur carrier)-H + 5'-deoxyadenosine + L-methionine + A + S-adenosyl-L-homocysteine + 2 H(+). Functionally, catalyzes the methylthiolation of N6-(dimethylallyl)adenosine (i(6)A), leading to the formation of 2-methylthio-N6-(dimethylallyl)adenosine (ms(2)i(6)A) at position 37 in tRNAs that read codons beginning with uridine. This Rhizobium johnstonii (strain DSM 114642 / LMG 32736 / 3841) (Rhizobium leguminosarum bv. viciae) protein is tRNA-2-methylthio-N(6)-dimethylallyladenosine synthase.